The primary structure comprises 185 residues: Ribosome-recycling factor (185 aa).

Residues 132-152 (RRDANEQLKKMEKDSELTEDD) are disordered.

Belongs to the RRF family.

It is found in the cytoplasm. Functionally, responsible for the release of ribosomes from messenger RNA at the termination of protein biosynthesis. May increase the efficiency of translation by recycling ribosomes from one round of translation to another. The chain is Ribosome-recycling factor from Alkaliphilus metalliredigens (strain QYMF).